Consider the following 176-residue polypeptide: B9 domain-containing protein 2 (176 aa).

The C2 B9-type domain maps to 2–118 (AEVHIIGQII…LSPTWRPLGT (117 aa)).

It belongs to the B9D family. As to quaternary structure, part of the tectonic-like complex (also named B9 complex).

It is found in the cytoplasm. The protein localises to the cytoskeleton. Its subcellular location is the cilium basal body. It localises to the cilium axoneme. Component of the tectonic-like complex, a complex localized at the transition zone of primary cilia and acting as a barrier that prevents diffusion of transmembrane proteins between the cilia and plasma membranes. The chain is B9 domain-containing protein 2 (b9d2) from Xenopus laevis (African clawed frog).